Consider the following 348-residue polypeptide: Aldose 1-epimerase (348 aa).

R80 serves as a coordination point for substrate. The active-site Proton donor is the H180. Residue D243 coordinates substrate. The active-site Proton acceptor is the E311.

This sequence belongs to the aldose epimerase family.

It catalyses the reaction alpha-D-glucose = beta-D-glucose. It participates in carbohydrate metabolism; hexose metabolism. Its function is as follows. Mutarotase converts alpha-aldose to the beta-anomer. It is active on D-glucose, L-arabinose, D-xylose, D-galactose, maltose and lactose. In Streptococcus thermophilus, this protein is Aldose 1-epimerase (galM).